A 507-amino-acid chain; its full sequence is Cytochrome P450 monooxygenase nodZ (507 aa).

2 consecutive transmembrane segments (helical) span residues 1–21 and 205–225; these read MITASTSVFGGLILAFIFSLL and GFLHCMAIAGTILGAVTPWFL. The N-linked (GlcNAc...) asparagine glycan is linked to asparagine 352. Heme is bound at residue cysteine 445.

The protein belongs to the cytochrome P450 family. The cofactor is heme.

The protein resides in the membrane. It functions in the pathway secondary metabolite biosynthesis. Its function is as follows. Cytochrome P450 monooxygenase; part of the gene cluster that mediates the biosynthesis of the indole diterpenes nodulisporic acids (NA). Nodulisporic acid A (NAA) and its chemically modified derivatives are of particular significance because of their highly potent insecticidal activity against blood-feeding arthropods and lack of observable adverse effects on mammals, in particular the tremogenicity associated with the paspaline-derived IDTs is not observed. The geranylgeranyl diphosphate (GGPP) synthase ggs1, localized outside of the cluster, is proposed to catalyze the first step in nodulisporic acid biosynthesis via conversion of farnesyl pyrophosphate and isopentyl pyrophosphate into geranylgeranyl pyrophosphate (GGPP). Condensation of indole-3-glycerol phosphate with GGPP by the prenyl transferase nodC then forms 3-geranylgeranylindole (3-GGI). Epoxidation by the FAD-dependent monooxygenase nodM leads to a single-epoxidized-GGI that is substrate of the terpene cyclase nodB for cyclization to yield emindole SB. The terminal methyl carbon, C28, of emindole SB is then oxidized by the cytochrome P450 monooxygenase nodW to produce nodulisporic acid F (NAF), the pentacyclic core of NAA. NAF is converted to nodulisporic acid E (NAE) via prenylation. This step is probably performed by one of the indole diterpene prenyltransferases nodD1 or nodD2. Several oxidation steps performed by the FAD-linked oxidoreductase nodO and one of the cytochrome P450 monooxygenase nodR, nodX or nodZ further convert NAE to nodulisporic acid D (NAD). NAD is substrate of cytochrome P450 monooxygenase nodJ to produce the precursor of nodulisporic acid C (NAC), converted to NAC by one of the indole diterpene prenyltransferases nodD1 or nodD2. The FAD-dependent monooxygenase nodY2 then oxidizes NAC to nodulisporic acid B (NAB). Finally NAB is converted to NAA by one of the cytochrome P450 monooxygenases nodR, nodX or nodZ. The protein is Cytochrome P450 monooxygenase nodZ of Hypoxylon pulicicidum.